We begin with the raw amino-acid sequence, 105 residues long: Large ribosomal subunit protein uL24 (105 aa).

The protein belongs to the universal ribosomal protein uL24 family. As to quaternary structure, part of the 50S ribosomal subunit.

Functionally, one of two assembly initiator proteins, it binds directly to the 5'-end of the 23S rRNA, where it nucleates assembly of the 50S subunit. In terms of biological role, one of the proteins that surrounds the polypeptide exit tunnel on the outside of the subunit. This chain is Large ribosomal subunit protein uL24, found in Clostridium botulinum (strain Langeland / NCTC 10281 / Type F).